The primary structure comprises 577 residues: Arginine--tRNA ligase (577 aa).

Positions Pro122–His132 match the 'HIGH' region motif.

This sequence belongs to the class-I aminoacyl-tRNA synthetase family. As to quaternary structure, monomer.

It localises to the cytoplasm. It carries out the reaction tRNA(Arg) + L-arginine + ATP = L-arginyl-tRNA(Arg) + AMP + diphosphate. This chain is Arginine--tRNA ligase, found in Citrobacter koseri (strain ATCC BAA-895 / CDC 4225-83 / SGSC4696).